The primary structure comprises 243 residues: MARKGPKRHLKRLAAPTSWYIERKAYKWAVRPRPGPHNMRTSIPLLYIVRDYLGYAKTAREARKILNEGKFLVDGRVRKDYKFPVGIMDVVSIPETGEHYRVLPNRIGKLILHPISEEEANIKPLRIRNKRMVKGAKIQLNFHDGTNHLIPLSEKDNYFTSYTVLMKVPEREILEVLPFEKGAYVFVTQGKNVARKGRIVEIKKFPMGWPDVVTIEDEEGELFDTLKEYAFVVGRDKPRISLP.

An S4 RNA-binding domain is found at 43 to 105 (IPLLYIVRDY…TGEHYRVLPN (63 aa)).

Belongs to the eukaryotic ribosomal protein eS4 family.

In Pyrococcus abyssi (strain GE5 / Orsay), this protein is Small ribosomal subunit protein eS4 (rps4e).